The sequence spans 198 residues: Glycerol-3-phosphate acyltransferase (198 aa).

Helical transmembrane passes span 5-25 (LILL…LWIG), 56-76 (SIVT…PFFF), 84-104 (FWLL…FAGF), 114-134 (AGVI…VFLV), and 158-178 (LFMG…FVIW).

This sequence belongs to the PlsY family. Probably interacts with PlsX.

It localises to the cell membrane. It carries out the reaction an acyl phosphate + sn-glycerol 3-phosphate = a 1-acyl-sn-glycero-3-phosphate + phosphate. Its pathway is lipid metabolism; phospholipid metabolism. In terms of biological role, catalyzes the transfer of an acyl group from acyl-phosphate (acyl-PO(4)) to glycerol-3-phosphate (G3P) to form lysophosphatidic acid (LPA). This enzyme utilizes acyl-phosphate as fatty acyl donor, but not acyl-CoA or acyl-ACP. In Listeria monocytogenes serotype 4b (strain CLIP80459), this protein is Glycerol-3-phosphate acyltransferase.